Here is a 37-residue protein sequence, read N- to C-terminus: Large ribosomal subunit protein bL36 (37 aa).

This sequence belongs to the bacterial ribosomal protein bL36 family.

The chain is Large ribosomal subunit protein bL36 from Mycoplasma genitalium (strain ATCC 33530 / DSM 19775 / NCTC 10195 / G37) (Mycoplasmoides genitalium).